The sequence spans 141 residues: Large ribosomal subunit protein uL11c (141 aa).

The protein belongs to the universal ribosomal protein uL11 family. Part of the ribosomal stalk of the 50S ribosomal subunit. Interacts with L10 and the large rRNA to form the base of the stalk. L10 forms an elongated spine to which L12 dimers bind in a sequential fashion forming a multimeric L10(L12)X complex.

The protein localises to the plastid. The protein resides in the chloroplast. Its function is as follows. Forms part of the ribosomal stalk which helps the ribosome interact with GTP-bound translation factors. This is Large ribosomal subunit protein uL11c from Cyanidium caldarium (Red alga).